Consider the following 101-residue polypeptide: Small ribosomal subunit protein uS14 (101 aa).

The protein belongs to the universal ribosomal protein uS14 family. In terms of assembly, part of the 30S ribosomal subunit. Contacts proteins S3 and S10.

Binds 16S rRNA, required for the assembly of 30S particles and may also be responsible for determining the conformation of the 16S rRNA at the A site. The chain is Small ribosomal subunit protein uS14 from Pseudoalteromonas atlantica (strain T6c / ATCC BAA-1087).